The sequence spans 465 residues: Glutamate--tRNA ligase (465 aa).

Positions 11 to 21 (PSPTGFIHLGN) match the 'HIGH' region motif. Over residues 120-131 (KPRYDGTWRPEP) the composition is skewed to basic and acidic residues. The interval 120-139 (KPRYDGTWRPEPGKVLPTPP) is disordered. The 'KMSKS' region motif lies at 243–247 (KMSKR). Residue Lys-246 participates in ATP binding.

This sequence belongs to the class-I aminoacyl-tRNA synthetase family. Glutamate--tRNA ligase type 1 subfamily. As to quaternary structure, monomer.

Its subcellular location is the cytoplasm. It catalyses the reaction tRNA(Glu) + L-glutamate + ATP = L-glutamyl-tRNA(Glu) + AMP + diphosphate. Its function is as follows. Catalyzes the attachment of glutamate to tRNA(Glu) in a two-step reaction: glutamate is first activated by ATP to form Glu-AMP and then transferred to the acceptor end of tRNA(Glu). This is Glutamate--tRNA ligase from Ralstonia nicotianae (strain ATCC BAA-1114 / GMI1000) (Ralstonia solanacearum).